The primary structure comprises 153 residues: Peptide methionine sulfoxide reductase B6 (153 aa).

A MsrB domain is found at Asn-28–Ala-149. Zn(2+)-binding residues include Cys-67, Cys-70, Cys-113, and Cys-116. Cys-85 and Cys-138 are joined by a disulfide. The active-site Nucleophile is the Cys-138.

It belongs to the MsrB Met sulfoxide reductase family. Zn(2+) serves as cofactor.

It localises to the cytoplasm. It is found in the cytosol. The enzyme catalyses L-methionyl-[protein] + [thioredoxin]-disulfide + H2O = L-methionyl-(R)-S-oxide-[protein] + [thioredoxin]-dithiol. Functionally, catalyzes the reduction of methionine sulfoxide (MetSO) to methionine in proteins. Plays a protective role against oxidative stress by restoring activity to proteins that have been inactivated by methionine oxidation. MSRB family specifically reduces the MetSO R-enantiomer. The sequence is that of Peptide methionine sulfoxide reductase B6 (MSRB6) from Arabidopsis thaliana (Mouse-ear cress).